We begin with the raw amino-acid sequence, 295 residues long: Lectin 11 (295 aa).

Over 1 to 22 (MHYSHFYFIINNTNMTINAIPK) the chain is Cytoplasmic. A helical membrane pass occupies residues 23–45 (LFATKNSISLSIVIFMYLLILVA). Residues 46 to 295 (NVKSDSSFNF…ILSWSFTSNM (250 aa)) lie on the Extracellular side of the membrane. N-linked (GlcNAc...) asparagine glycosylation is present at Asn152.

It belongs to the leguminous lectin family.

The protein localises to the membrane. May be involved in arbuscular mycorrhizal (AM) symbiosis with AM fungi. This Medicago truncatula (Barrel medic) protein is Lectin 11.